Here is a 345-residue protein sequence, read N- to C-terminus: Src kinase-associated phosphoprotein 1 (345 aa).

The PH domain occupies 109–212 (KIFKQGYLER…WVEQIQFLVK (104 aa)). The disordered stretch occupies residues 226 to 274 (ETYDDIESTESSPVVGLTNDSENSLQEDDVYESIPGDEETEESEDENYE). The span at 250 to 272 (LQEDDVYESIPGDEETEESEDEN) shows a compositional bias: acidic residues. The 62-residue stretch at 283–344 (FYGDYYQGLW…PKDYLTLAFD (62 aa)) folds into the SH3 domain.

The protein belongs to the SKAP family. As to quaternary structure, homodimer. Phosphorylated on tyrosines.

Its subcellular location is the cytoplasm. The protein localises to the nucleus. It localises to the cell membrane. Functionally, positively regulates T-cell receptor signaling. Required for optimal conjugation between T-cells and antigen-presenting cells. The protein is Src kinase-associated phosphoprotein 1 (skap1) of Xenopus tropicalis (Western clawed frog).